Reading from the N-terminus, the 730-residue chain is Procollagen-lysine,2-oxoglutarate 5-dioxygenase 1 (730 aa).

The signal sequence occupies residues 1–20; sequence MVPPAVLLPWVVLPLLGVQG. N-linked (GlcNAc...) asparagine glycans are attached at residues Asn-200, Asn-403, and Asn-541. The Fe2OG dioxygenase domain occupies 639–730; sequence QFELAFVVRY…RYIAVSFIDP (92 aa). The Fe cation site is built by His-659 and Asp-661. N-linked (GlcNAc...) asparagine glycosylation is present at Asn-689. His-711 is a binding site for Fe cation. Arg-721 is an active-site residue.

In terms of assembly, homodimer. The cofactor is Fe(2+). Requires L-ascorbate as cofactor.

The protein localises to the rough endoplasmic reticulum membrane. The enzyme catalyses L-lysyl-[collagen] + 2-oxoglutarate + O2 = (5R)-5-hydroxy-L-lysyl-[collagen] + succinate + CO2. In terms of biological role, forms hydroxylysine residues in -Xaa-Lys-Gly- sequences in collagens. These hydroxylysines serve as sites of attachment for carbohydrate units and are essential for the stability of the intermolecular collagen cross-links. This chain is Procollagen-lysine,2-oxoglutarate 5-dioxygenase 1 (PLOD1), found in Gallus gallus (Chicken).